We begin with the raw amino-acid sequence, 190 residues long: Shikimate kinase (190 aa).

19–24 (GSGKTT) is an ATP binding site. T23 provides a ligand contact to Mg(2+). 3 residues coordinate substrate: D41, R65, and G87. R124 is a binding site for ATP. R143 is a binding site for substrate.

This sequence belongs to the shikimate kinase family. In terms of assembly, monomer. The cofactor is Mg(2+).

It localises to the cytoplasm. It carries out the reaction shikimate + ATP = 3-phosphoshikimate + ADP + H(+). It functions in the pathway metabolic intermediate biosynthesis; chorismate biosynthesis; chorismate from D-erythrose 4-phosphate and phosphoenolpyruvate: step 5/7. Catalyzes the specific phosphorylation of the 3-hydroxyl group of shikimic acid using ATP as a cosubstrate. This chain is Shikimate kinase, found in Synechococcus sp. (strain ATCC 27144 / PCC 6301 / SAUG 1402/1) (Anacystis nidulans).